The primary structure comprises 387 residues: 3-ketoacyl-CoA thiolase (387 aa).

C91 functions as the Acyl-thioester intermediate in the catalytic mechanism. Residues H343 and C373 each act as proton acceptor in the active site.

The protein belongs to the thiolase-like superfamily. Thiolase family. As to quaternary structure, heterotetramer of two alpha chains (FadB) and two beta chains (FadA).

The protein localises to the cytoplasm. The enzyme catalyses an acyl-CoA + acetyl-CoA = a 3-oxoacyl-CoA + CoA. Its pathway is lipid metabolism; fatty acid beta-oxidation. Functionally, catalyzes the final step of fatty acid oxidation in which acetyl-CoA is released and the CoA ester of a fatty acid two carbons shorter is formed. The sequence is that of 3-ketoacyl-CoA thiolase from Vibrio cholerae serotype O1 (strain ATCC 39541 / Classical Ogawa 395 / O395).